The chain runs to 265 residues: MTLRLSAIDLRHSNGTLALRGLDLSIERGERVAIIGPSGAGKTTLLNLLASALPPSAGQLEVLGVNPWQLSSRQRQQLRSRIALIHQAPPLPARQRVVTAVSAGKLGQWGLGKSLLNLLHPLDVPGARAVLARLDLADKLFERCQQLSGGQLQRVGIARALYQAPELLLADEPVSAMDPRLADHTLALLCQHAIEHNVTLVASLHAVELALAHFPRIIGVRDGRIHFDLPAGEVERQHLDTLYANEQLSPQQVCEVAETVWAPRC.

Residues 3–247 (LRLSAIDLRH…HLDTLYANEQ (245 aa)) enclose the ABC transporter domain. An ATP-binding site is contributed by 36-43 (GPSGAGKT).

The protein belongs to the ABC transporter superfamily. Phosphonates importer (TC 3.A.1.9.1) family. As to quaternary structure, the complex is composed of two ATP-binding proteins (PhnC), two transmembrane proteins (PhnE) and a solute-binding protein (PhnD).

The protein localises to the cell inner membrane. It carries out the reaction phosphonate(out) + ATP + H2O = phosphonate(in) + ADP + phosphate + H(+). In terms of biological role, part of the ABC transporter complex PhnCDE involved in phosphonates import. Responsible for energy coupling to the transport system. This Pseudomonas syringae pv. tomato (strain ATCC BAA-871 / DC3000) protein is Phosphonates import ATP-binding protein PhnC 1.